The chain runs to 71 residues: Putative antitoxin VapB15 (71 aa).

This sequence belongs to the UPF0330 family.

In terms of biological role, possibly the antitoxin component of a type II toxin-antitoxin (TA) system. Its cognate toxin is VapC15 (Potential). This Archaeoglobus fulgidus (strain ATCC 49558 / DSM 4304 / JCM 9628 / NBRC 100126 / VC-16) protein is Putative antitoxin VapB15 (vapB15).